The primary structure comprises 653 residues: Amyloid beta A4 precursor protein-binding family B member 1-interacting protein (653 aa).

Residues 82 to 141 (NNKSTAPFPPADASNSYHFHPPPMPSIITEDLSLLPPPPEFDPHYPPPPPDPLTEPKTQE) are disordered. Positions 116–134 (LPPPPEFDPHYPPPPPDPL) are enriched in pro residues. The Ras-associating domain maps to 165-253 (KKRIVKVHMI…IHFLEKNEKY (89 aa)). The PH domain occupies 295 to 404 (VPELEAALYL…WVTGIRIAKY (110 aa)). Residues 462-481 (KHGEANKQEKKSSEVNKPET) show a composition bias toward basic and acidic residues. The disordered stretch occupies residues 462-653 (KHGEANKQEK…ALQKKREPPT (192 aa)). The span at 585 to 604 (PAPPPPPPPPAPAANVPPLP) shows a compositional bias: pro residues. The span at 605–614 (VKKHPPKPPK) shows a compositional bias: basic residues.

Belongs to the MRL family.

The protein resides in the cell membrane. It localises to the cytoplasm. It is found in the cytoskeleton. In terms of biological role, appears to function in the signal transduction from Ras activation to actin cytoskeletal remodeling. This Xenopus laevis (African clawed frog) protein is Amyloid beta A4 precursor protein-binding family B member 1-interacting protein (apbb1ip).